A 1809-amino-acid polypeptide reads, in one-letter code: Proprotein convertase subtilisin/kexin type 5 (1809 aa).

Residues 1-34 form the signal peptide; the sequence is MDWGWGSRCCRPGRRDLLCVLALLAGCLLPVCRT. The propeptide occupies 35–116; it reads RVYTNHWAVK…QQVVKKRTKR (82 aa). Topologically, residues 117–1700 are extracellular; the sequence is DYDLSRAQST…DTVFHEHTKT (1584 aa). Positions 136–455 constitute a Peptidase S8 domain; that stretch reads MWYMHCSDNT…FGLMDAEAMV (320 aa). Catalysis depends on charge relay system residues Asp-173 and His-214. N-linked (GlcNAc...) asparagine glycans are attached at residues Asn-227 and Asn-383. Residue Ser-388 is the Charge relay system of the active site. The 141-residue stretch at 463 to 603 folds into the P/Homo B domain; sequence TVPQQHVCVE…SLVLYGTSVQ (141 aa). A Cell attachment site motif is present at residues 521–523; it reads RGD. FU repeat units follow at residues 632–682, 685–732, 736–779, 781–826, 834–881, 884–929, 931–964, 965–1010, 1012–1054, 1058–1099, 1137–1179, 1183–1230, 1232–1276, 1278–1321, 1323–1369, 1373–1418, 1422–1467, 1471–1516, 1520–1567, 1571–1616, and 1622–1669; these read EDYA…GHFH, KKRC…GSYQ, KNIC…GQFF, GHDC…SYYL, YKSC…GEYI, QGHC…WKFE, KKQC…QDSE, YGEC…KTFG, KWEC…GFYG, LGEC…PTWP, TRQY…GTWL, SSSC…GFYA, DGVC…KHVA, EGVC…NFYP, MRQC…GTYK, NDEC…IEYW, SHRC…GYHT, SHQC…GYYG, SGRC…HYYA, AQTC…GEYR, and NFNC…SHPH. The segment at 638–1685 is CRM (Cys-rich motif); sequence CDPECSEVGC…DCQSSTDECI (1048 aa). Residue Asn-667 is glycosylated (N-linked (GlcNAc...) asparagine). 3 N-linked (GlcNAc...) asparagine glycosylation sites follow: Asn-754, Asn-804, and Asn-854. N-linked (GlcNAc...) asparagine glycans are attached at residues Asn-1642 and Asn-1664. Residues 1701-1721 form a helical membrane-spanning segment; the sequence is ALLVTSGAMLLLLLGAAVVVW. The Cytoplasmic portion of the chain corresponds to 1722 to 1809; the sequence is RKSRSQPVAK…EYDDESYSYQ (88 aa). AC stretches follow at residues 1757-1776 and 1788-1809; these read VIEY…IVYM and YGLL…YSYQ.

The protein belongs to the peptidase S8 family. In terms of tissue distribution, expressed in the intestine, brain, adrenal gland, anterior pituitary, thyroid, ovaries, testis and lung. Highest levels are found in the gut, duodenum, jejunum and ileum. Expression is higher in female than in male reproductive organs.

Its subcellular location is the secreted. The protein resides in the endomembrane system. Its function is as follows. Serine endoprotease that processes various proproteins by cleavage at paired basic amino acids, recognizing the RXXX[KR]R consensus motif. Likely functions in the constitutive and regulated secretory pathways. Plays an essential role in pregnancy establishment by proteolytic activation of a number of important factors such as BMP2, CALD1 and alpha-integrins. May be responsible for the maturation of gastrointestinal peptides. May be involved in the cellular proliferation of adrenal cortex via the activation of growth factors. The sequence is that of Proprotein convertase subtilisin/kexin type 5 (Pcsk5) from Rattus norvegicus (Rat).